We begin with the raw amino-acid sequence, 394 residues long: uncharacterized protein (394 aa).

Phosphoserine is present on residues S117 and S121. 3 disordered regions span residues 177 to 295 (DSDE…PGTF), 315 to 347 (KRSIMLPQDIDPTFPDSEPEDDGHASSTVGSLS), and 370 to 394 (SSEVLRNSKSPPLDIARKAVGAHRV). Residues 178–190 (SDEEDEVDDEEIE) show a composition bias toward acidic residues. Polar residues-rich tracts occupy residues 191–207 (SFNSFSRKMQTISNSRY) and 216–230 (EKQSCSSESDRVSQI). 2 stretches are compositionally biased toward acidic residues: residues 231-263 (SDDEEDEEGSADEEDEEDSDVELSESSLSDDED) and 284-295 (IPDDTDFVPGTF). Over residues 370-379 (SSEVLRNSKS) the composition is skewed to polar residues. Residue S379 is modified to Phosphoserine.

The protein localises to the nucleus. This is an uncharacterized protein from Schizosaccharomyces pombe (strain 972 / ATCC 24843) (Fission yeast).